Reading from the N-terminus, the 425-residue chain is Enolase (425 aa).

A (2R)-2-phosphoglycerate-binding site is contributed by glutamine 162. Glutamate 204 acts as the Proton donor in catalysis. 3 residues coordinate Mg(2+): aspartate 241, glutamate 284, and aspartate 311. The (2R)-2-phosphoglycerate site is built by lysine 336, arginine 365, serine 366, and lysine 387. The active-site Proton acceptor is the lysine 336.

It belongs to the enolase family. Mg(2+) is required as a cofactor.

It localises to the cytoplasm. Its subcellular location is the secreted. The protein localises to the cell surface. It catalyses the reaction (2R)-2-phosphoglycerate = phosphoenolpyruvate + H2O. Its pathway is carbohydrate degradation; glycolysis; pyruvate from D-glyceraldehyde 3-phosphate: step 4/5. Its function is as follows. Catalyzes the reversible conversion of 2-phosphoglycerate (2-PG) into phosphoenolpyruvate (PEP). It is essential for the degradation of carbohydrates via glycolysis. The sequence is that of Enolase from Brucella anthropi (strain ATCC 49188 / DSM 6882 / CCUG 24695 / JCM 21032 / LMG 3331 / NBRC 15819 / NCTC 12168 / Alc 37) (Ochrobactrum anthropi).